A 128-amino-acid chain; its full sequence is Large ribosomal subunit protein bL20c (128 aa).

This sequence belongs to the bacterial ribosomal protein bL20 family.

The protein resides in the plastid. The protein localises to the chloroplast. Binds directly to 23S ribosomal RNA and is necessary for the in vitro assembly process of the 50S ribosomal subunit. It is not involved in the protein synthesizing functions of that subunit. This Nicotiana sylvestris (Wood tobacco) protein is Large ribosomal subunit protein bL20c.